We begin with the raw amino-acid sequence, 1226 residues long: MRSRSGSGVRLDRILFMVEQTICSHQNPITALFANQKDFPGHAWVRDNVYIAQALWALYRAYMKCADFDEDLTKAKELGFTCVKMMQSILECLMRQAEKVELFKKYQRPLDALHSKFAVGTKGTVCGDADWGHLQMDAISLYLLTLAQITASGLQVVRNFDEVAFIQNLVYYIETGYRTPDYGVWERGDKTNQGIRELNASSIGMVKAALQALNDVGDLFVDGSRGSVVHVLPDEIEQCSAVLSSMLPRESFSKETDAALLGIISYPAFCVEDPELVSQTRETITQRLLGKYGCRRFMRDGYKTVLEDASRLYYNKSELQQFEDIECEWPIFLCYLILDAMYSKDDDAVEAYWRQLESVLVLSDKGFRLVPELYVVLKEHVSAEKAHPGTQDRVPGGATPFLWAQSLYVIICLLYEGFLLPAELDPLSRRLSVYEKRPPCEVQVTVLAESLDVQRELRAHDIHVQCVDEIDPVFTILPASALGQLLAKIGESKKLNLSGRPLDRPIGLLSTSRLYQIGNKFVIFTPQFMDSRRSHLMYDIRILTDEWSSELQYIYASWNSVSISGRPLVVLVITQGMLSTEGLSHFSNIHLNRHMKSTVIGAIKKINTGYLSGARVVMKDLSDFFRTTAVSKMEFRDKSAEDTLRSVAAEKVQFTLLTEDATEAKNEKITTPRGPRTLRRGESVKDRSAYTAVHKASMRHRSIALDSNDADLMKLRLAYKSRPRDLQDMDSTYQSPPPTQTPLGLVKEHSSGELRQQLLKTTRRGAENETTHRDLTAEQMNEMKADDLLDLVNETTVLEEQISIVHCLWMKFGPDYDTELGCQHITVRMLMEEVHTKACEAREWALVRLTAGLLKKQLEELSKAVTHLLVRQKQITVGIASKKEEVITCPKTNEELEKIMNRAYGDDANSFTLAQEIIVYLGSLVRTEPKLFLEMFRLRIGLIIQVLASELSRLRNISGAEAAETLLTVSPFELKSMIFSLLSGRLLEEYAEDGIHYSDTIRETRTGIGSFRRQIEERKSLRKSTRSVGGLEIPKEEDEDEEADEDDFQFGIWLRHRRIDGALNRVPNGFYAILWDTVHKMPHGVKINDTVLHWGLTQEMTRKEIKFALESEEALNRIAEPEYRELVVETLWLLGRLEKLVLLEQPNIPRDRPLDVDHILHVANQIFVDHNKHLETIVMECCASSNPNNTRCDGARNICKHFYDSAPAGEYGTSHYIIRALMQLYS.

The tract at residues 666–688 (NEKITTPRGPRTLRRGESVKDRS) is disordered. Residues 679 to 688 (RRGESVKDRS) are compositionally biased toward basic and acidic residues.

The protein belongs to the phosphorylase b kinase regulatory chain family.

It participates in glycan biosynthesis; glycogen metabolism. In terms of biological role, phosphorylase b kinase catalyzes the phosphorylation of serine in certain substrates, including troponin I. The alpha chain may bind calmodulin. This Caenorhabditis elegans protein is Probable phosphorylase b kinase regulatory subunit alpha.